The chain runs to 360 residues: Histidinol-phosphate aminotransferase (360 aa).

Residue Lys221 is modified to N6-(pyridoxal phosphate)lysine.

This sequence belongs to the class-II pyridoxal-phosphate-dependent aminotransferase family. Histidinol-phosphate aminotransferase subfamily. As to quaternary structure, homodimer. Pyridoxal 5'-phosphate is required as a cofactor.

The catalysed reaction is L-histidinol phosphate + 2-oxoglutarate = 3-(imidazol-4-yl)-2-oxopropyl phosphate + L-glutamate. The protein operates within amino-acid biosynthesis; L-histidine biosynthesis; L-histidine from 5-phospho-alpha-D-ribose 1-diphosphate: step 7/9. This chain is Histidinol-phosphate aminotransferase, found in Desulfitobacterium hafniense (strain Y51).